The primary structure comprises 367 residues: MSDSQTLVVKLGTSVLTGGSRRLNRAHIVELVRQCAQLHAAGHRIVIVTSGAIAAGREHLGYPELPATIASKQLLAAVGQSRLIQLWEQLFSIYGIHVGQMLLTRADMEDRERFLNARDTLRALLDNNIVPVINENDAVATAEIKVGDNDNLSALAAILAGADKLLLLTDQKGLYTADPRRNPQAELIKDVYGIDDALRAIAGDSVSGLGTGGMSTKLQAADVACRAGIDTIIAAGSKPGVIGDVMEGISVGTLFHAQATPLENRKRWIFGAPPAGEITVDEGATAAILERGSSLLPKGIKSVTGNFSRGEVIRICNLEGRDIAHGVSRYNSDALRRIAGHHSQEIDAILGYEYGPVAVHRDDMITR.

K10 is an ATP binding site. S50, D137, and N149 together coordinate substrate. Residues 169–170 (TD) and 211–217 (TGGMSTK) contribute to the ATP site. Positions 275-353 (AGEITVDEGA…QEIDAILGYE (79 aa)) constitute a PUA domain.

This sequence belongs to the glutamate 5-kinase family.

It localises to the cytoplasm. It carries out the reaction L-glutamate + ATP = L-glutamyl 5-phosphate + ADP. Its pathway is amino-acid biosynthesis; L-proline biosynthesis; L-glutamate 5-semialdehyde from L-glutamate: step 1/2. Its function is as follows. Catalyzes the transfer of a phosphate group to glutamate to form L-glutamate 5-phosphate. The chain is Glutamate 5-kinase from Shigella flexneri.